The sequence spans 313 residues: Meiotically up-regulated gene 100 protein, mitochondrial (313 aa).

A run of 2 helical transmembrane segments spans residues 147–167 (VFDYLFFLYGLSGTSILYTAG) and 178–198 (SGFITPFFQLLLLVLLFTLTF).

It is found in the mitochondrion inner membrane. Has a role in meiosis. In Schizosaccharomyces pombe (strain 972 / ATCC 24843) (Fission yeast), this protein is Meiotically up-regulated gene 100 protein, mitochondrial (mug100).